The following is a 282-amino-acid chain: uncharacterized protein (282 aa).

A run of 6 helical transmembrane segments spans residues 18-38 (PIVLLIPVPGSSVIHDLWAGT), 40-60 (LLVVFGISVLLTFYPGWVTIG), 87-107 (LWIVLAIGFLTAALAGGTPVV), 119-139 (ALHFLRITALSVVLLALGAMV), 164-184 (IPVDEWAVALALALRAFPMLI), and 260-280 (VTLAITAMASGTAVAIESLIL).

The protein belongs to the CbiQ family.

It is found in the cell membrane. This is an uncharacterized protein from Mycobacterium tuberculosis (strain CDC 1551 / Oshkosh).